A 263-amino-acid polypeptide reads, in one-letter code: uncharacterized protein (263 aa).

This is an uncharacterized protein from Archaeoglobus fulgidus (strain ATCC 49558 / DSM 4304 / JCM 9628 / NBRC 100126 / VC-16).